The following is a 487-amino-acid chain: Aspartyl/glutamyl-tRNA(Asn/Gln) amidotransferase subunit B (487 aa).

This sequence belongs to the GatB/GatE family. GatB subfamily. In terms of assembly, heterotrimer of A, B and C subunits.

The catalysed reaction is L-glutamyl-tRNA(Gln) + L-glutamine + ATP + H2O = L-glutaminyl-tRNA(Gln) + L-glutamate + ADP + phosphate + H(+). It catalyses the reaction L-aspartyl-tRNA(Asn) + L-glutamine + ATP + H2O = L-asparaginyl-tRNA(Asn) + L-glutamate + ADP + phosphate + 2 H(+). Functionally, allows the formation of correctly charged Asn-tRNA(Asn) or Gln-tRNA(Gln) through the transamidation of misacylated Asp-tRNA(Asn) or Glu-tRNA(Gln) in organisms which lack either or both of asparaginyl-tRNA or glutaminyl-tRNA synthetases. The reaction takes place in the presence of glutamine and ATP through an activated phospho-Asp-tRNA(Asn) or phospho-Glu-tRNA(Gln). The chain is Aspartyl/glutamyl-tRNA(Asn/Gln) amidotransferase subunit B from Chlamydia caviae (strain ATCC VR-813 / DSM 19441 / 03DC25 / GPIC) (Chlamydophila caviae).